The sequence spans 427 residues: Serine--tRNA ligase (427 aa).

231 to 233 (TAE) contacts L-serine. Residue 262 to 264 (RSE) participates in ATP binding. L-serine is bound at residue glutamate 285. Position 349–352 (349–352 (EISS)) interacts with ATP. Serine 385 contributes to the L-serine binding site.

Belongs to the class-II aminoacyl-tRNA synthetase family. Type-1 seryl-tRNA synthetase subfamily. Homodimer. The tRNA molecule binds across the dimer.

The protein localises to the cytoplasm. It carries out the reaction tRNA(Ser) + L-serine + ATP = L-seryl-tRNA(Ser) + AMP + diphosphate + H(+). The enzyme catalyses tRNA(Sec) + L-serine + ATP = L-seryl-tRNA(Sec) + AMP + diphosphate + H(+). It participates in aminoacyl-tRNA biosynthesis; selenocysteinyl-tRNA(Sec) biosynthesis; L-seryl-tRNA(Sec) from L-serine and tRNA(Sec): step 1/1. Catalyzes the attachment of serine to tRNA(Ser). Is also able to aminoacylate tRNA(Sec) with serine, to form the misacylated tRNA L-seryl-tRNA(Sec), which will be further converted into selenocysteinyl-tRNA(Sec). This chain is Serine--tRNA ligase, found in Exiguobacterium sp. (strain ATCC BAA-1283 / AT1b).